A 143-amino-acid polypeptide reads, in one-letter code: Large ribosomal subunit protein uL15 (143 aa).

The tract at residues 1-47 (MKLHELTPSEGSRFSRRRIGRGDSSGQGKTSGRGQKGQKARGKVRVG) is disordered. Residues 23–35 (DSSGQGKTSGRGQ) show a composition bias toward gly residues.

The protein belongs to the universal ribosomal protein uL15 family. Part of the 50S ribosomal subunit.

Its function is as follows. Binds to the 23S rRNA. This chain is Large ribosomal subunit protein uL15, found in Lactiplantibacillus plantarum (strain ATCC BAA-793 / NCIMB 8826 / WCFS1) (Lactobacillus plantarum).